A 301-amino-acid chain; its full sequence is tRNA dimethylallyltransferase (301 aa).

An ATP-binding site is contributed by 9 to 16; it reads GPTASGKS. Substrate is bound at residue 11–16; it reads TASGKS. Positions 34-37 are interaction with substrate tRNA; that stretch reads DSMQ.

This sequence belongs to the IPP transferase family. In terms of assembly, monomer. It depends on Mg(2+) as a cofactor.

It catalyses the reaction adenosine(37) in tRNA + dimethylallyl diphosphate = N(6)-dimethylallyladenosine(37) in tRNA + diphosphate. Catalyzes the transfer of a dimethylallyl group onto the adenine at position 37 in tRNAs that read codons beginning with uridine, leading to the formation of N6-(dimethylallyl)adenosine (i(6)A). This is tRNA dimethylallyltransferase from Corynebacterium glutamicum (strain R).